The primary structure comprises 420 residues: Mannose-1-phosphate guanylyltransferase regulatory subunit alpha (420 aa).

The segment at 2–251 (LKAVILIGGP…DGIWSQIKSA (250 aa)) is substrate-binding domain. Residues E85 and Q247 each coordinate GDP-alpha-D-mannose. A hexapeptide repeat domain region spans residues 273–420 (LAKHTPGGPW…SRSFTNQIIL (148 aa)). The interval 356 to 384 (TPSDPNPNDPRARMDSESLFKDGKLLPAI) is C-loop.

This sequence belongs to the transferase hexapeptide repeat family. Component of the GMPPA-GMPPB mannose-1-phosphate guanylyltransferase complex composed of 4 GMPPA subunits and 8 GMPPB subunits; the complex is organized into three layers, a central layer made up of 2 GMPPA dimers sandwiched between two layers each made up of 2 GMPPB dimers. In terms of tissue distribution, expressed in fibroblasts (at protein level).

It is found in the cytoplasm. In terms of biological role, regulatory subunit of the GMPPA-GMPPB mannose-1-phosphate guanylyltransferase complex; reduces the catalytic activity of GMPPB when part of the complex. Mediates allosteric feedback inhibition of GMPPB catalytic activity upon binding GDP-alpha-D-mannose. Together with GMPPB regulates GDP-alpha-D-mannose levels. This is Mannose-1-phosphate guanylyltransferase regulatory subunit alpha from Homo sapiens (Human).